Reading from the N-terminus, the 198-residue chain is Elongation factor Ts (198 aa).

Residues 81–84 (TDFV) are involved in Mg(2+) ion dislocation from EF-Tu.

The protein belongs to the EF-Ts family.

Its subcellular location is the cytoplasm. Functionally, associates with the EF-Tu.GDP complex and induces the exchange of GDP to GTP. It remains bound to the aminoacyl-tRNA.EF-Tu.GTP complex up to the GTP hydrolysis stage on the ribosome. The protein is Elongation factor Ts of Pseudothermotoga lettingae (strain ATCC BAA-301 / DSM 14385 / NBRC 107922 / TMO) (Thermotoga lettingae).